Consider the following 23-residue polypeptide: Alpha-conotoxin-like RgIB (23 aa).

Intrachain disulfides connect Cys-5/Cys-11 and Cys-6/Cys-19. A lacks the Ser-Xaa-Pro motif that is crucial for potent interaction with nAChR region spans residues 7 to 9; that stretch reads KNP.

Expressed by venom duct.

The protein resides in the secreted. Alpha-conotoxins act on postsynaptic membranes, they bind to the nicotinic acetylcholine receptors (nAChR) and thus inhibit them. Is a specific blocker of the alpha-3-beta-4/CHRNA3-CHRNB4 image nAChR and may also block alpha-3-beta-4-alpha-5 (CHRNA3-CHRNB4-CHRNA5) channels. Has possibly a distinct nAChR binding mode from other alpha-conotoxins, due to a different three residue motif (lacks the Ser-Xaa-Pro motif). In vivo, causes hyperactivity and behavioral disorders in mice following intracranial injection. This chain is Alpha-conotoxin-like RgIB, found in Conus regius (Crown cone).